Here is a 485-residue protein sequence, read N- to C-terminus: Carbohydrate sulfotransferase 7 (485 aa).

The Cytoplasmic segment spans residues 1-12 (MKGRRRRRREYC). The helical; Signal-anchor for type II membrane protein transmembrane segment at 13–33 (KFTLLLALYTLLLLLVPSVLD) threads the bilayer. The Lumenal portion of the chain corresponds to 34–485 (SGSEQDKGGR…PLETNANWAT (452 aa)). The interval 66-88 (EQGAEVRFQAEGNPDRSPRPQGN) is disordered. An N-linked (GlcNAc...) asparagine glycan is attached at Asn88. 109 to 115 (WRTGSSF) is a 3'-phosphoadenylyl sulfate binding site. N-linked (GlcNAc...) asparagine glycosylation is present at Asn185. A 3'-phosphoadenylyl sulfate-binding site is contributed by 277–285 (RDPRAVHNS). N-linked (GlcNAc...) asparagine glycosylation occurs at Asn406. The residue at position 461 (Ser461) is a Phosphoserine. Residues 465-475 (RDVKTVRKGET) are compositionally biased toward basic and acidic residues. A disordered region spans residues 465–485 (RDVKTVRKGETPLETNANWAT).

This sequence belongs to the sulfotransferase 1 family. Gal/GlcNAc/GalNAc subfamily.

Its subcellular location is the golgi apparatus membrane. The enzyme catalyses chondroitin beta-D-glucuronate + n 3'-phosphoadenylyl sulfate = chondroitin 6'-sulfate + n adenosine 3',5'-bisphosphate + n H(+). Its function is as follows. Sulfotransferase that utilizes 3'-phospho-5'-adenylyl sulfate (PAPS) as sulfonate donor to catalyze the transfer of sulfate to position 6 of non-reducing N-acetylglucosamine (GlcNAc) residues. Preferentially acts on mannose-linked GlcNAc. Also able to catalyze the transfer of sulfate to position 6 of the N-acetylgalactosamine (GalNAc) residue of chondroitin. Also acts on core 2 mucin-type oligosaccharide and N-acetyllactosamine oligomer with a lower efficiency. Has weak or no activity toward keratan sulfate and oligosaccharides containing the Galbeta1-4GlcNAc. Catalyzes 6-O-sulfation of beta-benzyl GlcNAc but not alpha- or beta-benzyl GalNAc. The polypeptide is Carbohydrate sulfotransferase 7 (Chst7) (Rattus norvegicus (Rat)).